A 133-amino-acid polypeptide reads, in one-letter code: NADPH-dependent 7-cyano-7-deazaguanine reductase (133 aa).

The active-site Thioimide intermediate is the cysteine 46. Aspartate 53 functions as the Proton donor in the catalytic mechanism. Substrate is bound by residues 68–70 (VEL) and 87–88 (HE).

Belongs to the GTP cyclohydrolase I family. QueF type 1 subfamily.

The protein resides in the cytoplasm. The enzyme catalyses 7-aminomethyl-7-carbaguanine + 2 NADP(+) = 7-cyano-7-deazaguanine + 2 NADPH + 3 H(+). It functions in the pathway tRNA modification; tRNA-queuosine biosynthesis. Its function is as follows. Catalyzes the NADPH-dependent reduction of 7-cyano-7-deazaguanine (preQ0) to 7-aminomethyl-7-deazaguanine (preQ1). This is NADPH-dependent 7-cyano-7-deazaguanine reductase from Parasynechococcus marenigrum (strain WH8102).